The primary structure comprises 791 residues: Protein Rf1, mitochondrial (791 aa).

The transit peptide at 1 to 27 directs the protein to the mitochondrion; that stretch reads MARRAASRAVGALRSDGSIQGRGGRAG. A disordered region spans residues 1–31; that stretch reads MARRAASRAVGALRSDGSIQGRGGRAGGSGA. The segment covering 20–30 has biased composition (gly residues); it reads QGRGGRAGGSG. PPR repeat units lie at residues 86 to 120, 121 to 156, 157 to 194, 195 to 229, 230 to 264, 265 to 299, 300 to 334, 335 to 369, 370 to 404, 405 to 439, 440 to 474, 475 to 509, 510 to 544, 545 to 579, 580 to 614, 615 to 649, 650 to 684, 685 to 719, and 720 to 754; these read DLCT…GFRV, DAIA…GCIP, NVFS…GSPP, DVVS…GILP, DVVT…GVMP, DCMT…GVEP, DVVT…GLKP, EITT…GIHP, DHYV…GLNP, NAVT…GLSP, GNIV…GICL, NTIF…GVKP, NVIT…GLKP, NTVT…GVSP, DIIT…GTQI, ELST…DLKL, EART…GLVP, NYWT…GCTV, and DSGM…HFSL.

Its subcellular location is the mitochondrion. Reduces the expression of the cytoplasmic male sterility (CMS)-associated mitochondrial gene ORF79, encoding a cytotoxic peptide. Can restore male fertility by blocking ORF79 production via endonucleolytic cleavage of dicistronic ATP6/ORF79 mRNA. Promotes the editing of ATP6 mRNAs independently of its cleavage function. The chain is Protein Rf1, mitochondrial (Rf1) from Oryza sativa subsp. indica (Rice).